A 204-amino-acid chain; its full sequence is Lymphotoxin-alpha (204 aa).

The N-terminal stretch at 1-33 (MTPPGRLYLLRVRSAPVLLLLGLLLGLPPGAQG) is a signal peptide. The THD domain maps to 62–204 (PAAHLIGDPS…SSVFFGAFAL (143 aa)). N95 carries an N-linked (GlcNAc...) asparagine glycan. C119 and C155 are oxidised to a cystine.

Belongs to the tumor necrosis factor family. In terms of assembly, homotrimer, and heterotrimer of either two LTB and one LTA subunits or (less prevalent) two LTA and one LTB subunits. Interacts with TNFRSF14.

Its subcellular location is the secreted. The protein resides in the membrane. In terms of biological role, cytokine that in its homotrimeric form binds to TNFRSF1A/TNFR1, TNFRSF1B/TNFBR and TNFRSF14/HVEM. In its heterotrimeric form with LTB binds to TNFRSF3/LTBR. Lymphotoxin is produced by lymphocytes and is cytotoxic for a wide range of tumor cells in vitro and in vivo. The protein is Lymphotoxin-alpha (LTA) of Canis lupus familiaris (Dog).